We begin with the raw amino-acid sequence, 226 residues long: ATP synthase subunit a (226 aa).

6 helical membrane passes run 17-37 (FSYF…AMMA), 79-99 (LVAT…LPGF), 105-125 (SLNL…FEGI), 134-154 (FAHF…IEIV), 176-196 (LFLM…AYVL), and 199-219 (FMAF…LAGA).

This sequence belongs to the ATPase A chain family. In terms of assembly, F-type ATPases have 2 components, CF(1) - the catalytic core - and CF(0) - the membrane proton channel. CF(1) has five subunits: alpha(3), beta(3), gamma(1), delta(1), epsilon(1). CF(0) has three main subunits: a(1), b(2) and c(9-12). The alpha and beta chains form an alternating ring which encloses part of the gamma chain. CF(1) is attached to CF(0) by a central stalk formed by the gamma and epsilon chains, while a peripheral stalk is formed by the delta and b chains.

It localises to the cell inner membrane. Its function is as follows. Key component of the proton channel; it plays a direct role in the translocation of protons across the membrane. This Campylobacter jejuni subsp. doylei (strain ATCC BAA-1458 / RM4099 / 269.97) protein is ATP synthase subunit a.